A 139-amino-acid chain; its full sequence is Histone H3.3 type a (139 aa).

The tract at residues 1-43 is disordered; the sequence is MARTKQTARKSTGAKVPRKHIGSKQAHKQTPVSSSSGGVKKVH. Lysine 5 is modified (N6,N6,N6-trimethyllysine; by set1; alternate). N6,N6-dimethyllysine; by set1; alternate is present on lysine 5. Lysine 5 and lysine 10 each carry N6-acetyllysine; alternate. Position 5 is an N6-methyllysine; by set1; alternate (lysine 5). N6,N6,N6-trimethyllysine; alternate is present on lysine 10. The residue at position 10 (lysine 10) is an N6,N6-dimethyllysine; alternate. An N6-methyllysine; alternate modification is found at lysine 10. A Phosphoserine modification is found at serine 11. Lysine 15 carries the post-translational modification N6-acetyllysine. Positions 16 to 27 are enriched in basic residues; the sequence is VPRKHIGSKQAH. An N6-acetyllysine; alternate mark is found at lysine 19, lysine 24, lysine 28, and lysine 40. N6-methyllysine; alternate occurs at positions 19, 24, 28, and 40. N6,N6,N6-trimethyllysine; alternate occurs at positions 28 and 40. Residues lysine 28 and lysine 40 each carry the N6,N6-dimethyllysine; alternate modification. Residue lysine 60 is modified to N6-acetyllysine. Lysine 83 carries the post-translational modification N6,N6,N6-trimethyllysine; alternate. Position 83 is an N6,N6-dimethyllysine; alternate (lysine 83). Lysine 83 is modified (N6-methyllysine; alternate).

This sequence belongs to the histone H3 family. As to quaternary structure, the nucleosome is a histone octamer containing two molecules each of H2A, H2B, H3 and H4 assembled in one H3-H4 heterotetramer and two H2A-H2B heterodimers. The octamer wraps approximately 147 bp of DNA. Acetylation is generally linked to gene activation. Post-translationally, different methylation states of H3K4 mark distinct developmental phases. H3K4me2 is associated with euchromatic regions. H3K4me3 is a mark of active chromatin. set1 is responsible for all mono-, di- and tri-methylation of H3K4. H3K4me facilitates subsequent acetylation of H3 and H4. Methylation at H3K9 and H3K27 are linked to gene repression. In terms of processing, H3S10ph, which is linked to gene activation, prevents methylation at H3K9 but facilitates acetylation of H3 and H4.

The protein resides in the nucleus. Its subcellular location is the chromosome. Its function is as follows. Core component of nucleosome. Nucleosomes wrap and compact DNA into chromatin, limiting DNA accessibility to the cellular machineries which require DNA as a template. Histones thereby play a central role in transcription regulation, DNA repair, DNA replication and chromosomal stability. DNA accessibility is regulated via a complex set of post-translational modifications of histones, also called histone code, and nucleosome remodeling. In Dictyostelium discoideum (Social amoeba), this protein is Histone H3.3 type a (H3a).